Consider the following 601-residue polypeptide: ATP-dependent lipid A-core flippase (601 aa).

6 helical membrane-spanning segments follow: residues 35 to 55 (FAVA…LAFL), 77 to 97 (LAII…AILM), 150 to 170 (AVTS…VIFY), 173 to 193 (WQLA…IAKF), 263 to 283 (MEFL…YQVI), and 286 to 306 (SSTP…YEPV). Positions 36-318 (AVAMVCMLIA…LTNVNNTIQQ (283 aa)) constitute an ABC transmembrane type-1 domain. In terms of domain architecture, ABC transporter spans 352–585 (IEIRNISFAY…RGEYYKLHQL (234 aa)). Position 384-391 (384-391 (GMSGGGKT)) interacts with ATP.

The protein belongs to the ABC transporter superfamily. Lipid exporter (TC 3.A.1.106) family. In terms of assembly, homodimer.

It is found in the cell inner membrane. It carries out the reaction ATP + H2O + lipid A-core oligosaccharideSide 1 = ADP + phosphate + lipid A-core oligosaccharideSide 2.. Its function is as follows. Involved in lipopolysaccharide (LPS) biosynthesis. Translocates lipid A-core from the inner to the outer leaflet of the inner membrane. Transmembrane domains (TMD) form a pore in the inner membrane and the ATP-binding domain (NBD) is responsible for energy generation. In Syntrophus aciditrophicus (strain SB), this protein is ATP-dependent lipid A-core flippase.